We begin with the raw amino-acid sequence, 456 residues long: uncharacterized protein (456 aa).

A TRAM domain is found at 5 to 63; it reads LVKKGQQISLKIKRLGINGEGIGYYKKLIIFVPGALPKEEVTATITNVTPKFAEGTLQS. Residues C76, C82, C85, and C165 each coordinate [4Fe-4S] cluster. The S-adenosyl-L-methionine site is built by Q289, Y318, D339, and D387. The Nucleophile role is filled by C414.

This sequence belongs to the class I-like SAM-binding methyltransferase superfamily. RNA M5U methyltransferase family.

This is an uncharacterized protein from Enterococcus faecalis (strain ATCC 700802 / V583).